Here is a 101-residue protein sequence, read N- to C-terminus: Citrate lyase acyl carrier protein (101 aa).

Residue Ser-14 is modified to O-(phosphoribosyl dephospho-coenzyme A)serine.

It belongs to the CitD family. Oligomer with a subunit composition of (alpha,beta,gamma)6.

It is found in the cytoplasm. Its function is as follows. Covalent carrier of the coenzyme of citrate lyase. This chain is Citrate lyase acyl carrier protein, found in Streptococcus uberis (strain ATCC BAA-854 / 0140J).